Here is a 356-residue protein sequence, read N- to C-terminus: MAAMASTAFAPSVSSTTNKLFDSSFHGAPMSPSLLRLQPIKSSRPNNLSISASASPPYDLNTFKFDPIKESIVSREMTRRYMTDMITYADTDVVVVGAGSAGLSCAYELSKNPNIQIAIIEQSVSPGGGAWLGGQLFSAMVVRKPAHIFLDELGIDYDEQDNYVVIKHAALFTSTIMSKLLARPNVKLFNAVAAEDLIVKGGRVGGVVTNWALVSMNHDTQSCMDPNVMEAKVVVSSCGHDGPFGATGVKRLKSIGMIEEVPGMKALDMNSAEDAIVRLTREVVPGMIVTGMEVAEIDGAPRMGPTFGAMMISGQKAAHLALKSLGQPNALDGTYVGGVHPELILAAADSAETADA.

Residues 1–51 (MAAMASTAFAPSVSSTTNKLFDSSFHGAPMSPSLLRLQPIKSSRPNNLSIS) constitute a chloroplast transit peptide. Substrate-binding positions include A101, 121–122 (EQ), G129, and A194. Position 223 is a 2,3-didehydroalanine (Cys) (C223). Substrate contacts are provided by residues D225, H240, M292, and 302–304 (RMG).

Belongs to the THI4 family. As to quaternary structure, homooctamer. The cofactor is Fe cation. Post-translationally, during the catalytic reaction, a sulfide is transferred from Cys-223 to a reaction intermediate, generating a dehydroalanine residue.

It localises to the plastid. Its subcellular location is the chloroplast. The catalysed reaction is [ADP-thiazole synthase]-L-cysteine + glycine + NAD(+) = [ADP-thiazole synthase]-dehydroalanine + ADP-5-ethyl-4-methylthiazole-2-carboxylate + nicotinamide + 3 H2O + 2 H(+). Its function is as follows. Involved in biosynthesis of the thiamine precursor thiazole. Catalyzes the conversion of NAD and glycine to adenosine diphosphate 5-(2-hydroxyethyl)-4-methylthiazole-2-carboxylic acid (ADT), an adenylated thiazole intermediate. The reaction includes an iron-dependent sulfide transfer from a conserved cysteine residue of the protein to a thiazole intermediate. The enzyme can only undergo a single turnover, which suggests it is a suicide enzyme. May have additional roles in adaptation to various stress conditions and in DNA damage tolerance. In Citrus sinensis (Sweet orange), this protein is Thiamine thiazole synthase, chloroplastic.